A 341-amino-acid chain; its full sequence is MATWRRDGRLTGGQRLLCAGLAGTLSLSLTAPLELATVLAQVGVVRGHARGPWATGHRVWRAEGLRALWKGNAVACLRLFPCSAVQLAAYRKFVVLFTDDLGHISQWSSIMAGSLAGMVSTIVTYPTDLIKTRLIMQNILEPSYRGLLHAFSTIYQQEGFLALYRGVSLTVVGALPFSAGSLLVYMNLEKIWNGPRDQFSLPQNFANVCLAAAVTQTLSFPFETVKRKMQAQSPYLPHSGGVDVHFSGAVDCFRQIVKAQGVLGLWNGLTANLLKIVPYFGIMFSTFEFCKRICLYQNGYILSPLSYKLTPGVDQSLQPQELRELKKFFKTRKPKPKKPTL.

Solcar repeat units follow at residues 11–101, 105–185, and 200–298; these read TGGQ…TDDL, SQWS…LLVY, and SLPQ…LYQN. Transmembrane regions (helical) follow at residues 16 to 36, 68 to 88, 110 to 130, 166 to 186, 205 to 225, and 262 to 282; these read LLCA…LELA, LWKG…VQLA, IMAG…TDLI, GVSL…LVYM, FANV…FETV, and VLGL…YFGI.

The protein belongs to the mitochondrial carrier (TC 2.A.29) family.

It localises to the mitochondrion inner membrane. The polypeptide is Solute carrier family 25 member 43 (SLC25A43) (Homo sapiens (Human)).